The sequence spans 425 residues: Terminal nucleotidyltransferase 5B (425 aa).

Positions 1 to 42 (MMPSESGAERRDRAAAQVGTAAATAVATAAPAGGGPDPEALS) are disordered. The span at 15 to 31 (AAQVGTAAATAVATAAP) shows a compositional bias: low complexity.

The protein belongs to the TENT family.

The protein localises to the cytoplasm. It is found in the nucleus. It catalyses the reaction RNA(n) + ATP = RNA(n)-3'-adenine ribonucleotide + diphosphate. Functionally, catalyzes the transfer of one adenosine molecule from an ATP to an mRNA poly(A) tail bearing a 3'-OH terminal group in an ATP hydrolysis-dependent manner. May be involved in maintaining the translation efficiency of at least some genes through preventing degradation of their mRNAs. Prefers RNA molecules that are adenosine-rich close to 3'-end. In addition, may inhibit cell proliferation and cell cycle progression through ubiquitination of beta-catenin/CTNNB1. The protein is Terminal nucleotidyltransferase 5B of Homo sapiens (Human).